Consider the following 275-residue polypeptide: Putative ankyrin repeat protein L715 (275 aa).

4 ANK repeats span residues 94-123 (NINY…DINY), 124-153 (NNGL…NTND), 155-183 (IFQL…SIDP), and 184-213 (IYST…SDST). Residues 253–275 (NQDESDVGDDAENDIENDIEDDN) form a disordered region. Over residues 255–275 (DESDVGDDAENDIENDIEDDN) the composition is skewed to acidic residues.

The polypeptide is Putative ankyrin repeat protein L715 (Acanthamoeba polyphaga mimivirus (APMV)).